The sequence spans 873 residues: Ectonucleotide pyrophosphatase/phosphodiesterase family member 3 (873 aa).

Residues 1 to 11 lie on the Cytoplasmic side of the membrane; sequence MESMLTLAMEQ. Residues 12–30 form a helical; Signal-anchor for type II membrane protein membrane-spanning segment; that stretch reads PVKRNTLKKYKIACIVLLA. The Extracellular segment spans residues 31–873; sequence LLVIVSLGLG…TYLPTFETTI (843 aa). SMB domains lie at 51-93 and 94-138; these read QGSC…VEST and RIWM…GETS. 10 cysteine pairs are disulfide-bonded: cysteine 54-cysteine 71, cysteine 58-cysteine 89, cysteine 69-cysteine 82, cysteine 75-cysteine 81, cysteine 98-cysteine 115, cysteine 103-cysteine 133, cysteine 113-cysteine 126, cysteine 119-cysteine 125, cysteine 144-cysteine 190, and cysteine 152-cysteine 364. A Cell attachment site motif is present at residues 78–80; it reads RGD. The phosphodiesterase stretch occupies residues 160-544; sequence PVILFSMDGF…HGSLNHLLKV (385 aa). Position 167 (aspartate 167) interacts with Zn(2+). Lysine 204 contacts ATP. Residue threonine 205 participates in Zn(2+) binding. The Nucleophile role is filled by threonine 205. Residue asparagine 226 coordinates ATP. N-linked (GlcNAc...) asparagine glycosylation is present at asparagine 236. ATP is bound at residue glutamate 275. Asparagine 279 is a glycosylation site (N-linked (GlcNAc...) asparagine). Tyrosine 289 contacts ATP. The N-linked (GlcNAc...) asparagine glycan is linked to asparagine 290. Zn(2+) is bound by residues aspartate 325, histidine 329, aspartate 372, and histidine 373. 6 cysteine pairs are disulfide-bonded: cysteine 380/cysteine 477, cysteine 428/cysteine 816, cysteine 561/cysteine 621, cysteine 573/cysteine 677, cysteine 575/cysteine 662, and cysteine 785/cysteine 795. Residue asparagine 425 is glycosylated (N-linked (GlcNAc...) asparagine). Residue histidine 482 coordinates Zn(2+). Residues asparagine 532, asparagine 592, asparagine 685, and asparagine 697 are each glycosylated (N-linked (GlcNAc...) asparagine). Residues 580–873 form a nuclease region; sequence NSIQLEQVNQ…TYLPTFETTI (294 aa). The Ca(2+) site is built by aspartate 750, asparagine 752, aspartate 754, histidine 756, and aspartate 758. Asparagine 787 carries N-linked (GlcNAc...) asparagine glycosylation.

Monomer and homodimer. Zn(2+) is required as a cofactor. N-glycosylated. N-glycosylation is necessary for normal transport to the cell membrane, but is not the apical targeting signal.

The protein resides in the cell membrane. The protein localises to the apical cell membrane. It is found in the secreted. The enzyme catalyses a ribonucleoside 5'-triphosphate + H2O = a ribonucleoside 5'-phosphate + diphosphate + H(+). It carries out the reaction ATP + H2O = AMP + diphosphate + H(+). The catalysed reaction is CTP + H2O = CMP + diphosphate + H(+). It catalyses the reaction GTP + H2O = GMP + diphosphate + H(+). The enzyme catalyses UTP + H2O = UMP + diphosphate + H(+). It carries out the reaction UDP-N-acetyl-alpha-D-glucosamine + H2O = N-acetyl-alpha-D-glucosamine 1-phosphate + UMP + 2 H(+). The catalysed reaction is P(1),P(3)-bis(5'-adenosyl) triphosphate + H2O = AMP + ADP + 2 H(+). It catalyses the reaction P(1),P(4)-bis(5'-adenosyl) tetraphosphate + H2O = AMP + ATP + 2 H(+). The enzyme catalyses P(1),P(5)-bis(5'-adenosyl) pentaphosphate + H2O = adenosine 5'-tetraphosphate + AMP + 2 H(+). It carries out the reaction P(1),P(4)-bis(5'-guanosyl) tetraphosphate + H2O = GMP + GTP + 2 H(+). The catalysed reaction is Hydrolytically removes 5'-nucleotides successively from the 3'-hydroxy termini of 3'-hydroxy-terminated oligonucleotides.. Hydrolase that metabolizes extracellular nucleotides, including ATP, GTP, UTP and CTP. Limits mast cells and basophils response during inflammation and during the chronic phases of allergic responses by eliminating extracellular ATP, a signaling molecule activating these cells in an autocrine manner. Metabolizes extracellular ATP in the lumen of the small intestine, and thereby prevents ATP-induced apoptosis of intestinal plasmacytoid dendritic cells. Has a broad specificity and can also hydrolyze UDP-GlcNAc into UMP and GlcNAc-1-phosphate and potentially several other intracellular nucleotide sugars, including UDP-GalNAc, CMP-NeuAc, GDP-Fuc, and UDP-GlcA. Thereby, could modulate glycan biosynthesis and protein glycosylation. Can hydrolyze extracellular dinucleoside polyphosphates, including the vasoactive adenosine polyphosphates as well. In addition, displays an alkaline phosphodiesterase activity in vitro. The sequence is that of Ectonucleotide pyrophosphatase/phosphodiesterase family member 3 from Pongo abelii (Sumatran orangutan).